The chain runs to 511 residues: uncharacterized protein (511 aa).

Residues 59–79 (VPVAANDDQPDGSRQSVRGRQ) are disordered.

Belongs to the transposase 25 family.

This is an uncharacterized protein from Sinorhizobium fredii (strain NBRC 101917 / NGR234).